A 554-amino-acid polypeptide reads, in one-letter code: Chaperonin GroEL (554 aa).

Residues 29 to 32, lysine 50, 86 to 90, glycine 418, and aspartate 499 contribute to the ATP site; these read TLGP and DGTTT. A disordered region spans residues 528 to 554; that stretch reads HEEDNNTNRSGGGVGGGHHGGMGGMDF. Gly residues predominate over residues 537–554; sequence SGGGVGGGHHGGMGGMDF.

This sequence belongs to the chaperonin (HSP60) family. As to quaternary structure, forms a cylinder of 14 subunits composed of two heptameric rings stacked back-to-back. Interacts with the co-chaperonin GroES.

The protein localises to the cytoplasm. The enzyme catalyses ATP + H2O + a folded polypeptide = ADP + phosphate + an unfolded polypeptide.. Its function is as follows. Together with its co-chaperonin GroES, plays an essential role in assisting protein folding. The GroEL-GroES system forms a nano-cage that allows encapsulation of the non-native substrate proteins and provides a physical environment optimized to promote and accelerate protein folding. The protein is Chaperonin GroEL of Orientia tsutsugamushi (strain Boryong) (Rickettsia tsutsugamushi).